We begin with the raw amino-acid sequence, 490 residues long: Protein lag-3 (490 aa).

5 disordered regions span residues 18–55, 105–155, 213–235, 307–362, and 391–490; these read PSVAGMKPSTSKTTHSPPPEEPTAPFVNDNLPNPEDEP, EDEE…PTSE, SSADSIRSVPTPASSMHQPSPAE, SSSE…MQRI, and QQQQ…ANIN. The segment covering 105–119 has biased composition (basic and acidic residues); it reads EDEERKRVEQQKNKE. Residues 122 to 138 are compositionally biased toward polar residues; that stretch reads NASTSAPTSSRNGGQSV. Positions 307–318 are enriched in polar residues; it reads SSSESPTKQSPM. 3 stretches are compositionally biased toward low complexity: residues 341–359, 391–404, and 413–456; these read QLQQQQNKMRLMQQQQQEM, QQQQQQQMQQHHQM, and QAHQ…HHQM.

In terms of assembly, component of a complex consisting of at least a lin-12/Notch intracellular domain (NICD), lag-1, and lag-3. Interacts with a NICD of lin-12/Notch or glp-1/Notch; the interactions are direct. Expressed in the progenitor zone and the early pachytene region of the hermaphrodite gonad.

The protein localises to the nucleus. In terms of biological role, glp-1/Notch and lin-12/Notch proteins promote signaling by recruiting lag-3 to target promoters, where it functions as a transcriptional activator, probably as part of a complex with a Notch intracellular domain (NICD) and the transcription regulator lag-1. Involved in the p53-mediated germ-cell apoptotic response to DNA damage, perhaps acting as a transcriptional activator. May regulate phosphatase lip-1 mRNA transcription downstream of glp-1. This is Protein lag-3 (sel-8) from Caenorhabditis elegans.